The following is a 155-amino-acid chain: Large ribosomal subunit protein uL13 (155 aa).

It belongs to the universal ribosomal protein uL13 family. As to quaternary structure, part of the 50S ribosomal subunit.

This protein is one of the early assembly proteins of the 50S ribosomal subunit, although it is not seen to bind rRNA by itself. It is important during the early stages of 50S assembly. The protein is Large ribosomal subunit protein uL13 of Rickettsia akari (strain Hartford).